A 938-amino-acid chain; its full sequence is Isoleucine--tRNA ligase (938 aa).

The short motif at 58-68 (PYANGSIHIGH) is the 'HIGH' region element. Glutamate 561 provides a ligand contact to L-isoleucyl-5'-AMP. Positions 602-606 (KMSKS) match the 'KMSKS' region motif. Lysine 605 contributes to the ATP binding site. Positions 901, 904, 921, and 924 each coordinate Zn(2+).

It belongs to the class-I aminoacyl-tRNA synthetase family. IleS type 1 subfamily. Monomer. It depends on Zn(2+) as a cofactor.

The protein resides in the cytoplasm. The catalysed reaction is tRNA(Ile) + L-isoleucine + ATP = L-isoleucyl-tRNA(Ile) + AMP + diphosphate. Functionally, catalyzes the attachment of isoleucine to tRNA(Ile). As IleRS can inadvertently accommodate and process structurally similar amino acids such as valine, to avoid such errors it has two additional distinct tRNA(Ile)-dependent editing activities. One activity is designated as 'pretransfer' editing and involves the hydrolysis of activated Val-AMP. The other activity is designated 'posttransfer' editing and involves deacylation of mischarged Val-tRNA(Ile). This Sodalis glossinidius (strain morsitans) protein is Isoleucine--tRNA ligase.